The following is a 419-amino-acid chain: Inward rectifier potassium channel 16 (419 aa).

Residues Met-1–Asp-67 are Cytoplasmic-facing. A helical transmembrane segment spans residues Thr-68–Leu-94. At Ile-95 to Ser-117 the chain is on the extracellular side. The segment at residues Phe-118–Tyr-134 is an intramembrane region (helical; Pore-forming). Positions Thr-131–Tyr-136 match the Selectivity filter motif. The Extracellular segment spans residues Gly-135–Cys-143. Residues Ser-144–Lys-171 form a helical membrane-spanning segment. At Met-172–Met-419 the chain is on the cytoplasmic side. A phosphoserine mark is found at Ser-358, Ser-374, and Ser-376.

Belongs to the inward rectifier-type potassium channel (TC 1.A.2.1) family. KCNJ16 subfamily. It forms heteromeric channels with Kir4.1/KCNJ10; this interaction is required for KCNJ16 localization to the basolateral membrane in kidney cells. As a heteromer with KCNJ10, may interact with MAGI1; this interaction may facilitate KCNJ10/KCNJ16 potassium channel expression at the basolateral membrane in kidney cells. May form heteromers with Kir2.1/KCNJ2. Can form heteromeric channels with Kir4.2/KCNJ15. Expressed in the brain, testis, liver, spleen, kidney, submaxillary gland and adrenals. In the kidney, expressed in the epithelial cells of both proximal and distal convoluted tubules, in the endothelial cells surrounding glomerular capillaries and in the flattened parietal layer of Bowman's capsule.

Its subcellular location is the membrane. The protein resides in the basolateral cell membrane. The catalysed reaction is K(+)(in) = K(+)(out). Channel activity is strongly regulated by variations of cytosolic pH; channels are activated by alkaline and inhibited by acidic pH values. Activated by phosphatidylinositol 4,5 biphosphate (PtdIns(4,5)P2). In terms of biological role, inward rectifier potassium channels are characterized by a greater tendency to allow potassium to flow into the cell rather than out of it. Their voltage dependence is regulated by the concentration of extracellular potassium; as external potassium is raised, the voltage range of the channel opening shifts to more positive voltages. The inward rectification is mainly due to the blockage of outward current by internal magnesium. KCNJ16 may be involved in the regulation of fluid and pH balance. In the kidney, together with KCNJ10, mediates basolateral K(+) recycling in distal tubules; this process is critical for Na(+) reabsorption at the tubules. The polypeptide is Inward rectifier potassium channel 16 (Kcnj16) (Rattus norvegicus (Rat)).